We begin with the raw amino-acid sequence, 85 residues long: Beta-toxin BmKAS (85 aa).

The first 19 residues, 1–19, serve as a signal peptide directing secretion; sequence MKTVIFLIVSSLLLIGVKT. Positions 20–82 constitute an LCN-type CS-alpha/beta domain; sequence DNGYLLDKYT…LWNYNTNKCN (63 aa). 4 disulfides stabilise this stretch: Cys31-Cys81, Cys35-Cys56, Cys42-Cys63, and Cys46-Cys65.

In terms of tissue distribution, expressed by the venom gland.

The protein resides in the secreted. In terms of biological role, beta toxins bind voltage-independently at site-4 of sodium channels (Nav) and shift the voltage of activation toward more negative potentials thereby affecting sodium channel activation and promoting spontaneous and repetitive firing. It binds to distinct receptor sites of mammal and insect voltage-gated sodium channels. It displays antinociceptive effect in rat models, which is due to its specific modulation of sodium channels of sensory neurons. It also significantly stimulates the binding of [3H]-ryanodine to ryanodine receptors on the sarcoplasmic reticulum of the skeletal muscle through an indirect mechanism. And it promotes noradrenaline release from the rat hippocampus slice. This chain is Beta-toxin BmKAS, found in Olivierus martensii (Manchurian scorpion).